The primary structure comprises 205 residues: Large ribosomal subunit protein uL3 (205 aa).

Belongs to the universal ribosomal protein uL3 family. In terms of assembly, part of the 50S ribosomal subunit. Forms a cluster with proteins L14 and L19.

In terms of biological role, one of the primary rRNA binding proteins, it binds directly near the 3'-end of the 23S rRNA, where it nucleates assembly of the 50S subunit. The protein is Large ribosomal subunit protein uL3 of Bacteroides fragilis (strain ATCC 25285 / DSM 2151 / CCUG 4856 / JCM 11019 / LMG 10263 / NCTC 9343 / Onslow / VPI 2553 / EN-2).